The primary structure comprises 395 residues: MTVPATRKDLMIVNMGPHHPSMHGVLRLIVTLDGEDVIDCEPILGYLHRGMEKIAENRTIVQYLPYVTRWDYLATMFTEAITVNGPEQLGNIQVPKRASYIRAILLELSRIASHLLWLGPFMADIGAQTPFFYIFRERELIYDLFEAATGMRMMHNFFRIGGVAADLPHGWIDKCLDFCDYFLTGVAEYQKFITRNPIFLERVEGVGIIGGEEALNWGLSGPMLRASGIQWDLRKVDHYECYDEFDWEVQWQNEGDSLARYLVRIREMTESIKIIQQALEGIPGGPYENLEIRRFDIDRVKDPEWNDFEYRFISKKPSPTFELSKQELYVRVEAPKGELGIFLVGDRSVFPWRWKIRPPGFINLQILPQLVKRMKLADIMTILGSIDIIMGEVDR.

Belongs to the complex I 49 kDa subunit family. NDH is composed of at least 16 different subunits, 5 of which are encoded in the nucleus.

The protein localises to the plastid. It localises to the chloroplast thylakoid membrane. The catalysed reaction is a plastoquinone + NADH + (n+1) H(+)(in) = a plastoquinol + NAD(+) + n H(+)(out). The enzyme catalyses a plastoquinone + NADPH + (n+1) H(+)(in) = a plastoquinol + NADP(+) + n H(+)(out). NDH shuttles electrons from NAD(P)H:plastoquinone, via FMN and iron-sulfur (Fe-S) centers, to quinones in the photosynthetic chain and possibly in a chloroplast respiratory chain. The immediate electron acceptor for the enzyme in this species is believed to be plastoquinone. Couples the redox reaction to proton translocation, and thus conserves the redox energy in a proton gradient. The protein is NAD(P)H-quinone oxidoreductase subunit H, chloroplastic of Coffea arabica (Arabian coffee).